A 283-amino-acid polypeptide reads, in one-letter code: Protein FAM78A (283 aa).

This sequence belongs to the FAM78 family.

The sequence is that of Protein FAM78A (FAM78A) from Homo sapiens (Human).